The primary structure comprises 439 residues: MRLSKFFLPVSKEAPADAAIVSHQLMLRTGMIRQNGAGIYSWLPLGYRVLKRIEQIVREEMNRAGAIEMLMPTLQQADLWRESGRYDDYGKEMLRIKDRHERDMLYGPTNEELITDVFRTYVKSYKQLPLNLYHQQWKFRDEVRPRFGVMRGREFLMKDAYSFDLTEEDARAAYRKMFCAYLNAFDRMGLTAIPMRADTGPIGGDLSHEFIILADTGESAVFCDKALLDLPAPGLDLDFESDLTPFVTERTGYYAATEEMHDEAAFNALPEDRRVSARGIEVGHIFFFGTKYSKPMNAVVQGPDGQMVPVQMGSYGIGVSRLLGAIIEACHDENGIVWPESVAPFDVGLINMRPGNEACDAACNTLYAALTAAGREVLYDETDDRAGAKFARMDLIGLPWQTTVGPRGVTEGKVEVKNRKTGEKHDVKIEDMLAQLKGS.

The protein belongs to the class-II aminoacyl-tRNA synthetase family. ProS type 2 subfamily. In terms of assembly, homodimer.

The protein localises to the cytoplasm. It catalyses the reaction tRNA(Pro) + L-proline + ATP = L-prolyl-tRNA(Pro) + AMP + diphosphate. Functionally, catalyzes the attachment of proline to tRNA(Pro) in a two-step reaction: proline is first activated by ATP to form Pro-AMP and then transferred to the acceptor end of tRNA(Pro). The chain is Proline--tRNA ligase from Hyphomonas neptunium (strain ATCC 15444).